We begin with the raw amino-acid sequence, 473 residues long: MTLFPIFADLTGRRVLVVGGGAVAVRKTQALLQAGAEVVVGAPRLDPALAALAEQGGIARLDGGFEPAWLAGAWLVVAATDDRAVNAAVSEAARARRVFCNVVDDAELSSFQVPSVVDRSPLIVAISSSGVAPVLARRLRERIESLFDHSLGQLAALAARYRPRIRAARPDLGQRRRFYDWLLDGPVAARLRQQQPGLAEQELEQALRAPQAAPRGSVVLVGAGPGDPGLLTLKALRALNEADIILYDRLVSEGVLALARRDAERVPVGKLPGEDHDATQARIHALMLAQARAGRRVVRLKGGDAFIFGRGGEELEYLRAHDVPYEVVPGITAALACAAYAGIPLTHRDHAQSVRMVTAHCRADQDTLDWAGLARDQQTLAFYMGVGQLDYVTARLLEHGRAPATPFALIENGSRPEQRVVTGTLAELPEIARRRSVRPPALLVIGEVAALADTLQWFGQHQHGLPGPQALAA.

The segment at 1–203 (MTLFPIFADL…QQPGLAEQEL (203 aa)) is precorrin-2 dehydrogenase /sirohydrochlorin ferrochelatase. NAD(+)-binding positions include 22 to 23 (AV) and 43 to 44 (PR). Ser128 is modified (phosphoserine). The tract at residues 216–473 (GSVVLVGAGP…GLPGPQALAA (258 aa)) is uroporphyrinogen-III C-methyltransferase. An S-adenosyl-L-methionine-binding site is contributed by Pro225. The active-site Proton acceptor is the Asp248. Residue Lys270 is the Proton donor of the active site. S-adenosyl-L-methionine contacts are provided by residues 302–304 (GGD), Ile307, 332–333 (TA), Met384, and Gly413.

The protein in the N-terminal section; belongs to the precorrin-2 dehydrogenase / sirohydrochlorin ferrochelatase family. It in the C-terminal section; belongs to the precorrin methyltransferase family.

The enzyme catalyses uroporphyrinogen III + 2 S-adenosyl-L-methionine = precorrin-2 + 2 S-adenosyl-L-homocysteine + H(+). It carries out the reaction precorrin-2 + NAD(+) = sirohydrochlorin + NADH + 2 H(+). The catalysed reaction is siroheme + 2 H(+) = sirohydrochlorin + Fe(2+). It participates in cofactor biosynthesis; adenosylcobalamin biosynthesis; precorrin-2 from uroporphyrinogen III: step 1/1. It functions in the pathway cofactor biosynthesis; adenosylcobalamin biosynthesis; sirohydrochlorin from precorrin-2: step 1/1. The protein operates within porphyrin-containing compound metabolism; siroheme biosynthesis; precorrin-2 from uroporphyrinogen III: step 1/1. Its pathway is porphyrin-containing compound metabolism; siroheme biosynthesis; siroheme from sirohydrochlorin: step 1/1. It participates in porphyrin-containing compound metabolism; siroheme biosynthesis; sirohydrochlorin from precorrin-2: step 1/1. Its function is as follows. Multifunctional enzyme that catalyzes the SAM-dependent methylations of uroporphyrinogen III at position C-2 and C-7 to form precorrin-2 via precorrin-1. Then it catalyzes the NAD-dependent ring dehydrogenation of precorrin-2 to yield sirohydrochlorin. Finally, it catalyzes the ferrochelation of sirohydrochlorin to yield siroheme. This Bordetella parapertussis (strain 12822 / ATCC BAA-587 / NCTC 13253) protein is Siroheme synthase.